The primary structure comprises 675 residues: uncharacterized protein (675 aa).

The next 4 helical transmembrane spans lie at 2–22 (QHTF…DFFF), 397–417 (LFLL…VFIA), 448–468 (LLVA…LCCY), and 481–501 (IFVY…TYAA). Disordered regions lie at residues 616–635 (YSPN…DIND) and 646–675 (QRMG…ELSD). Residues 665–675 (VFSESDEELSD) are compositionally biased toward acidic residues. Position 669 is a phosphoserine (Ser669).

Belongs to the 1-acyl-sn-glycerol-3-phosphate acyltransferase family.

The protein localises to the endoplasmic reticulum membrane. This is an uncharacterized protein from Schizosaccharomyces pombe (strain 972 / ATCC 24843) (Fission yeast).